A 461-amino-acid chain; its full sequence is Alpha-tubulin N-acetyltransferase 1 (461 aa).

Residues 2-189 (VEFRFDIKPL…NNFVLYEGFF (188 aa)) enclose the N-acetyltransferase domain. Acetyl-CoA contacts are provided by residues 123–136 (FYVHESRQRAGLGK) and 159–168 (SEKLLSFLSK). Disordered regions lie at residues 196-295 (NGGG…GNHD), 314-362 (NSYE…PEVA), and 418-443 (RPPGHEVTSPGQDNTDAMSTVSSGGG). Residues 233–254 (RRGSQQQTTPNARLQQITQISP) are compositionally biased toward polar residues. Low complexity predominate over residues 283–293 (GSAEANSGNGN). Residues 318-336 (PEPEVEPEPEPEPEPEPEP) show a composition bias toward acidic residues. Residues 339–356 (ITPPSPPPKSHTPTPPSV) are compositionally biased toward pro residues. The span at 426 to 439 (SPGQDNTDAMSTVS) shows a compositional bias: polar residues.

The protein belongs to the acetyltransferase ATAT1 family.

The enzyme catalyses L-lysyl-[alpha-tubulin] + acetyl-CoA = N(6)-acetyl-L-lysyl-[alpha-tubulin] + CoA + H(+). Its function is as follows. Specifically acetylates 'Lys-40' in alpha-tubulin on the lumenal side of microtubules. Promotes microtubule destabilization and accelerates microtubule dynamics; this activity may be independent of acetylation activity. Acetylates alpha-tubulin with a slow enzymatic rate, due to a catalytic site that is not optimized for acetyl transfer. Enters the microtubule through each end and diffuses quickly throughout the lumen of microtubules. Acetylates only long/old microtubules because of its slow acetylation rate since it does not have time to act on dynamically unstable microtubules before the enzyme is released. Acetylates central spindle microtubules. In Drosophila melanogaster (Fruit fly), this protein is Alpha-tubulin N-acetyltransferase 1.